The following is a 238-amino-acid chain: Deoxyribose-phosphate aldolase (238 aa).

Aspartate 102 acts as the Proton donor/acceptor in catalysis. The Schiff-base intermediate with acetaldehyde role is filled by lysine 164. The Proton donor/acceptor role is filled by lysine 193.

Belongs to the DeoC/FbaB aldolase family. DeoC type 1 subfamily.

It is found in the cytoplasm. It catalyses the reaction 2-deoxy-D-ribose 5-phosphate = D-glyceraldehyde 3-phosphate + acetaldehyde. It functions in the pathway carbohydrate degradation; 2-deoxy-D-ribose 1-phosphate degradation; D-glyceraldehyde 3-phosphate and acetaldehyde from 2-deoxy-alpha-D-ribose 1-phosphate: step 2/2. In terms of biological role, catalyzes a reversible aldol reaction between acetaldehyde and D-glyceraldehyde 3-phosphate to generate 2-deoxy-D-ribose 5-phosphate. The protein is Deoxyribose-phosphate aldolase of Rhodospirillum rubrum (strain ATCC 11170 / ATH 1.1.1 / DSM 467 / LMG 4362 / NCIMB 8255 / S1).